A 260-amino-acid polypeptide reads, in one-letter code: Purine nucleoside phosphorylase XF_0940 (260 aa).

Positions 79, 120, and 137 each coordinate Zn(2+).

This sequence belongs to the purine nucleoside phosphorylase YfiH/LACC1 family. As to quaternary structure, homodimer. The cofactor is Cu(2+). Zn(2+) is required as a cofactor.

The enzyme catalyses adenosine + phosphate = alpha-D-ribose 1-phosphate + adenine. It carries out the reaction S-methyl-5'-thioadenosine + phosphate = 5-(methylsulfanyl)-alpha-D-ribose 1-phosphate + adenine. The catalysed reaction is inosine + phosphate = alpha-D-ribose 1-phosphate + hypoxanthine. It catalyses the reaction adenosine + H2O + H(+) = inosine + NH4(+). Purine nucleoside enzyme that catalyzes the phosphorolysis of adenosine and inosine nucleosides, yielding D-ribose 1-phosphate and the respective free bases, adenine and hypoxanthine. Also catalyzes the phosphorolysis of S-methyl-5'-thioadenosine into adenine and S-methyl-5-thio-alpha-D-ribose 1-phosphate. Also has adenosine deaminase activity. The sequence is that of Purine nucleoside phosphorylase XF_0940 from Xylella fastidiosa (strain 9a5c).